The chain runs to 173 residues: Co-chaperone protein HscB homolog (173 aa).

Positions 3-75 (NPFALFDLPI…ILRADCIIAL (73 aa)) constitute a J domain.

This sequence belongs to the HscB family. Interacts with HscA and stimulates its ATPase activity.

In terms of biological role, co-chaperone involved in the maturation of iron-sulfur cluster-containing proteins. Seems to help targeting proteins to be folded toward HscA. This Mannheimia succiniciproducens (strain KCTC 0769BP / MBEL55E) protein is Co-chaperone protein HscB homolog.